The following is a 332-amino-acid chain: Biotin synthase (332 aa).

Residues 53-282 enclose the Radical SAM core domain; the sequence is HFGKKVKLNM…TKEIRISGGR (230 aa). [4Fe-4S] cluster is bound by residues C71, C75, and C78. [2Fe-2S] cluster contacts are provided by C115, C147, C207, and R277.

This sequence belongs to the radical SAM superfamily. Biotin synthase family. Homodimer. Requires [4Fe-4S] cluster as cofactor. [2Fe-2S] cluster is required as a cofactor.

It catalyses the reaction (4R,5S)-dethiobiotin + (sulfur carrier)-SH + 2 reduced [2Fe-2S]-[ferredoxin] + 2 S-adenosyl-L-methionine = (sulfur carrier)-H + biotin + 2 5'-deoxyadenosine + 2 L-methionine + 2 oxidized [2Fe-2S]-[ferredoxin]. It participates in cofactor biosynthesis; biotin biosynthesis; biotin from 7,8-diaminononanoate: step 2/2. Functionally, catalyzes the conversion of dethiobiotin (DTB) to biotin by the insertion of a sulfur atom into dethiobiotin via a radical-based mechanism. This Bacillus cereus (strain AH187) protein is Biotin synthase.